The following is a 327-amino-acid chain: Endo-1,4-beta-xylanase A (327 aa).

In terms of domain architecture, GH10 spans 1-323; sequence AASGLEAAMK…KPSYTSTLNT (323 aa). A disulfide bridge connects residues cysteine 81 and cysteine 123. N-linked (GlcNAc...) asparagine glycosylation occurs at asparagine 101. Glutamate 131 (proton donor) is an active-site residue. Residue glutamate 245 is the Nucleophile of the active site. Cysteines 273 and 279 form a disulfide.

This sequence belongs to the glycosyl hydrolase 10 (cellulase F) family. In terms of assembly, monomer.

The protein localises to the secreted. Its subcellular location is the extracellular space. It carries out the reaction Endohydrolysis of (1-&gt;4)-beta-D-xylosidic linkages in xylans.. The protein operates within glycan degradation; xylan degradation. Functionally, catalyzes the hydrolysis of the internal glycosidic bonds in heteroxylans, releasing mainly xylobiose and xylotriose. Most active on oat-spelt xylan. The chain is Endo-1,4-beta-xylanase A from Fusarium oxysporum f. sp. lycopersici (strain 4287 / CBS 123668 / FGSC 9935 / NRRL 34936) (Fusarium vascular wilt of tomato).